The following is a 339-amino-acid chain: Uroporphyrinogen decarboxylase (339 aa).

Residues R23–R27, D72, Y147, T202, and H315 contribute to the substrate site.

It belongs to the uroporphyrinogen decarboxylase family. In terms of assembly, homodimer.

It is found in the cytoplasm. It catalyses the reaction uroporphyrinogen III + 4 H(+) = coproporphyrinogen III + 4 CO2. The protein operates within porphyrin-containing compound metabolism; protoporphyrin-IX biosynthesis; coproporphyrinogen-III from 5-aminolevulinate: step 4/4. Catalyzes the decarboxylation of four acetate groups of uroporphyrinogen-III to yield coproporphyrinogen-III. This is Uroporphyrinogen decarboxylase from Geobacter sp. (strain M21).